The primary structure comprises 426 residues: Cytochrome c biogenesis protein Ccs1 (426 aa).

3 helical membrane-spanning segments follow: residues 11–31 (LKFAIALLLLISITITFGSII), 70–90 (NFWFISLLLSLGISLIACTFF), and 153–173 (IAPVFVHLSIILILLGSIFAS).

Belongs to the Ccs1/CcsB family. As to quaternary structure, may interact with CcsA.

The protein resides in the plastid. It localises to the chloroplast thylakoid membrane. Its function is as follows. Required during biogenesis of c-type cytochromes (cytochrome c6 and cytochrome f) at the step of heme attachment. The sequence is that of Cytochrome c biogenesis protein Ccs1 from Heterosigma akashiwo (strain CCMP452 / OLISTH).